A 351-amino-acid chain; its full sequence is 1-acylglycerol-3-phosphate O-acyltransferase ABHD5 (351 aa).

The region spanning 79–184 (PLVLLHGFGG…LILVEPWGFP (106 aa)) is the AB hydrolase-1 domain. Position 124 is a phosphoserine (Ser-124). The short motif at 329–334 (HYVYAD) is the HXXXXD motif element.

The protein belongs to the peptidase S33 family. ABHD4/ABHD5 subfamily. In terms of assembly, interacts with ADRP and PLIN. Interacts with PNPLA2. Interacts with PLIN5; promotes interaction with PNPLA2.

The protein resides in the cytoplasm. It localises to the lipid droplet. The catalysed reaction is a 1-acyl-sn-glycero-3-phosphate + an acyl-CoA = a 1,2-diacyl-sn-glycero-3-phosphate + CoA. It catalyses the reaction 1-(9Z-octadecenoyl)-sn-glycero-3-phosphate + (9Z)-octadecenoyl-CoA = 1,2-di-(9Z-octadecenoyl)-sn-glycero-3-phosphate + CoA. The enzyme catalyses 1-(9Z-octadecenoyl)-sn-glycero-3-phosphate + hexadecanoyl-CoA = 1-(9Z)-octadecenoyl-2-hexadecanoyl-sn-glycero-3-phosphate + CoA. It carries out the reaction 1-(9Z-octadecenoyl)-sn-glycero-3-phosphate + octadecanoyl-CoA = 1-(9Z-octadecenoyl)-2-octadecanoyl-sn-glycero-3-phosphate + CoA. The catalysed reaction is 1-(9Z-octadecenoyl)-sn-glycero-3-phosphate + (5Z,8Z,11Z,14Z)-eicosatetraenoyl-CoA = 1-(9Z)-octadecenoyl-2-(5Z,8Z,11Z,14Z)-eicosatetraenoyl-sn-glycero-3-phosphate + CoA. It catalyses the reaction eicosanoyl-CoA + 1-(9Z-octadecenoyl)-sn-glycero-3-phosphate = 1-(9Z)-octadecenoyl-2-eicosanoyl-sn-glycero-3-phosphate + CoA. The enzyme catalyses 1-hexadecanoyl-sn-glycero-3-phosphate + (9Z)-octadecenoyl-CoA = 1-hexadecanoyl-2-(9Z-octadecenoyl)-sn-glycero-3-phosphate + CoA. It carries out the reaction 1-octadecanoyl-sn-glycero-3-phosphate + (9Z)-octadecenoyl-CoA = 1-octadecanoyl-2-(9Z-octadecenoyl)-sn-glycero-3-phosphate + CoA. The catalysed reaction is 1-(5Z,8Z,11Z,14Z-eicosatetraenoyl)-sn-glycero-3-phosphate + (9Z)-octadecenoyl-CoA = 1-(5Z,8Z,11Z,14Z)-eicosatetraenoyl-2-(9Z)-octadecenoyl-sn-glycero-3-phosphate + CoA. Its activity is regulated as follows. Acyltransferase activity is inhibited by detergents such as Triton X-100 and 3-[(3-cholamidopropyl)dimethylammonio]-1-propanesulfonate (CHAPS). Acyltransferase activity is inhibited by the presence of magnesium and calcium. In terms of biological role, coenzyme A-dependent lysophosphatidic acid acyltransferase that catalyzes the transfer of an acyl group on a lysophosphatidic acid. Functions preferentially with 1-oleoyl-lysophosphatidic acid followed by 1-palmitoyl-lysophosphatidic acid, 1-stearoyl-lysophosphatidic acid and 1-arachidonoyl-lysophosphatidic acid as lipid acceptor. Functions preferentially with arachidonoyl-CoA followed by oleoyl-CoA as acyl group donors. Functions in phosphatidic acid biosynthesis. May regulate the cellular storage of triacylglycerol through activation of the phospholipase PNPLA2. Involved in keratinocyte differentiation. Regulates lipid droplet fusion. This Rattus norvegicus (Rat) protein is 1-acylglycerol-3-phosphate O-acyltransferase ABHD5.